Here is a 785-residue protein sequence, read N- to C-terminus: Probable cationic amino acid transporter (785 aa).

15 helical membrane passes run 58 to 78 (LVSL…SGLV), 83 to 103 (AGPG…LSGV), 119 to 141 (AYTY…NLIL), 187 to 207 (YPDI…ALGV), 216 to 236 (VLNV…LFFV), 251 to 271 (WSGV…FDII), 291 to 311 (ASLV…TLMV), 337 to 357 (IVAI…LFPM), 360 to 380 (VIYA…VSTY), 384 to 404 (PAVA…LVSL), 407 to 427 (LIEM…VCVL), 568 to 588 (CVVL…FGSG), 596 to 616 (WAVL…FIII), 628 to 648 (MAPC…YLML), and 655 to 675 (WIRF…YGMW). A disordered region spans residues 715–785 (DQGPFQNWGK…VDDDLDDPLE (71 aa)). A compositionally biased stretch (low complexity) spans 727–740 (QQKQPQQEQSEPQS). The span at 775 to 785 (VVDDDLDDPLE) shows a compositional bias: acidic residues.

Belongs to the amino acid-polyamine-organocation (APC) superfamily.

Its subcellular location is the lysosome membrane. Its function is as follows. May be involved in arginine transport. The protein is Probable cationic amino acid transporter (slc7a14a) of Danio rerio (Zebrafish).